Here is a 116-residue protein sequence, read N- to C-terminus: Phosphoribosyl-AMP cyclohydrolase (116 aa).

A Mg(2+)-binding site is contributed by aspartate 78. A Zn(2+)-binding site is contributed by cysteine 79. 2 residues coordinate Mg(2+): aspartate 80 and aspartate 82. Residues cysteine 95 and cysteine 102 each contribute to the Zn(2+) site.

It belongs to the PRA-CH family. Homodimer. Requires Mg(2+) as cofactor. Zn(2+) is required as a cofactor.

Its subcellular location is the cytoplasm. It carries out the reaction 1-(5-phospho-beta-D-ribosyl)-5'-AMP + H2O = 1-(5-phospho-beta-D-ribosyl)-5-[(5-phospho-beta-D-ribosylamino)methylideneamino]imidazole-4-carboxamide. It functions in the pathway amino-acid biosynthesis; L-histidine biosynthesis; L-histidine from 5-phospho-alpha-D-ribose 1-diphosphate: step 3/9. In terms of biological role, catalyzes the hydrolysis of the adenine ring of phosphoribosyl-AMP. This chain is Phosphoribosyl-AMP cyclohydrolase, found in Acidiphilium cryptum (strain JF-5).